We begin with the raw amino-acid sequence, 463 residues long: L-seryl-tRNA(Sec) selenium transferase (463 aa).

The residue at position 295 (Lys295) is an N6-(pyridoxal phosphate)lysine.

The protein belongs to the SelA family. As to quaternary structure, homodecamer; pentamer of dimers. Binds only one seryl-tRNA(Sec) per dimer. Pyridoxal 5'-phosphate serves as cofactor.

It localises to the cytoplasm. The catalysed reaction is L-seryl-tRNA(Sec) + selenophosphate + H(+) = L-selenocysteinyl-tRNA(Sec) + phosphate. It functions in the pathway aminoacyl-tRNA biosynthesis; selenocysteinyl-tRNA(Sec) biosynthesis; selenocysteinyl-tRNA(Sec) from L-seryl-tRNA(Sec) (bacterial route): step 1/1. Its function is as follows. Converts seryl-tRNA(Sec) to selenocysteinyl-tRNA(Sec) required for selenoprotein biosynthesis. This is L-seryl-tRNA(Sec) selenium transferase from Proteus mirabilis (strain HI4320).